The following is a 140-amino-acid chain: Small ribosomal subunit protein bS6 (140 aa).

Residues 96 to 140 (VTGQSEMLKAEENRSERRERRERPENAESNDGDDSDSNDSDNADE) form a disordered region. Residues 103–121 (LKAEENRSERRERRERPEN) are compositionally biased toward basic and acidic residues. The span at 123–140 (ESNDGDDSDSNDSDNADE) shows a compositional bias: acidic residues.

The protein belongs to the bacterial ribosomal protein bS6 family.

Its function is as follows. Binds together with bS18 to 16S ribosomal RNA. This is Small ribosomal subunit protein bS6 from Ectopseudomonas mendocina (strain ymp) (Pseudomonas mendocina).